The primary structure comprises 122 residues: Replication termination protein (122 aa).

As to quaternary structure, homodimer.

In terms of biological role, plays a role in DNA replication and termination (fork arrest mechanism). Two dimers of rtp bind to the two inverted repeat regions (IRI and IRII) present in the termination site. The binding of each dimer is centered on an 8 bp direct repeat. This Bacillus spizizenii (strain ATCC 23059 / NRRL B-14472 / W23) (Bacillus subtilis subsp. spizizenii) protein is Replication termination protein (rtp).